Consider the following 475-residue polypeptide: MTGPHSNIVHVIGAGLAGSEAAWQVAKAGVPVMLHEMRPDRMTEAHRTDGLAELVCSNSFRSDDAANNAVGLLHAEMRRLGSLIMRAADANQVPAGGALAVDRDGFSAAVTKALNDHPLIEIARGEIAGLPPADWGNVIVATGPLTSAPLADAIRELTDENALAFFDAIAPIVHRESIDMSVAWFQSRYDKVGPGGNGADYINCPMTKEQYEGFVAALIAGEKTEFKEWETNTPYFDGCLPIEVMAERGPETLRHGPMKPVGLTNPHDPTTKAYAIVQLRQDNKLGTLYNIVGFQTKLKYGEQQRIFRTIPGLEKAEFARLGGLHRNTFLNSPKLLDGQLRLRAQPRLRFAGQMTGCEGYVESASVGLIAGLYAAADARGETLASPPATTALGSLLGHITGGHIETIEPGTRSFQPMNINFGLFPPLASAPTKKPDGTRLRGNEKTVAKKQAMSALALADLDRWIADHLRIAAAA.

An FAD-binding site is contributed by 13 to 18 (GAGLAG).

This sequence belongs to the MnmG family. TrmFO subfamily. The cofactor is FAD.

It is found in the cytoplasm. It catalyses the reaction uridine(54) in tRNA + (6R)-5,10-methylene-5,6,7,8-tetrahydrofolate + NADH + H(+) = 5-methyluridine(54) in tRNA + (6S)-5,6,7,8-tetrahydrofolate + NAD(+). The catalysed reaction is uridine(54) in tRNA + (6R)-5,10-methylene-5,6,7,8-tetrahydrofolate + NADPH + H(+) = 5-methyluridine(54) in tRNA + (6S)-5,6,7,8-tetrahydrofolate + NADP(+). Catalyzes the folate-dependent formation of 5-methyl-uridine at position 54 (M-5-U54) in all tRNAs. In Bradyrhizobium diazoefficiens (strain JCM 10833 / BCRC 13528 / IAM 13628 / NBRC 14792 / USDA 110), this protein is Methylenetetrahydrofolate--tRNA-(uracil-5-)-methyltransferase TrmFO.